Reading from the N-terminus, the 1703-residue chain is Protein TIC 214 (1703 aa).

6 helical membrane passes run 39–61, 67–87, 90–110, 138–158, 174–194, and 220–240; these read YYGFLTALPIGPSQILSIRTFFL, GIICILGSMMGQFVILLSIYC, LYVMLVKPHLMTLLVIPYMFY, LLLDSFIFQLLNPILLPNPVL, FFLTSSLLGWLCGHILFINSI, and FSILISITFFLYLGRSPVPLI. 2 disordered regions span residues 615-643 and 1431-1494; these read GPRKGKLEDKEKEKEKAAQTQTEVKKERE and TKEP…WKSK. A coiled-coil region spans residues 618–660; it reads KGKLEDKEKEKEKAAQTQTEVKKEREKEKEERVIKRFQNQSDF. A compositionally biased stretch (basic and acidic residues) spans 619–643; the sequence is GKLEDKEKEKEKAAQTQTEVKKERE.

This sequence belongs to the TIC214 family. In terms of assembly, part of the Tic complex.

It localises to the plastid. Its subcellular location is the chloroplast inner membrane. In terms of biological role, involved in protein precursor import into chloroplasts. May be part of an intermediate translocation complex acting as a protein-conducting channel at the inner envelope. The polypeptide is Protein TIC 214 (Psilotum nudum (Whisk fern)).